The primary structure comprises 100 residues: High mobility group protein C (100 aa).

The segment at residues 12–80 (PKRPLSAFFL…KYEKDMQAYE (69 aa)) is a DNA-binding region (HMG box). A disordered region spans residues 81–100 (KKYGKPEKQKKIKKNKKGSK). The segment covering 90-100 (KKIKKNKKGSK) has biased composition (basic residues).

The protein resides in the nucleus. It is found in the chromosome. This chain is High mobility group protein C, found in Tetrahymena thermophila.